Reading from the N-terminus, the 431-residue chain is Adenylosuccinate synthetase (431 aa).

Residues G12 to K18 and G40 to T42 contribute to the GTP site. D13 (proton acceptor) is an active-site residue. Mg(2+)-binding residues include D13 and G40. IMP contacts are provided by residues D13–K16, N38–H41, T130, R144, Q225, T240, and R304. Residue H41 is the Proton donor of the active site. S300–R306 lines the substrate pocket. Residues R306, K332–D334, and S414–G416 each bind GTP.

It belongs to the adenylosuccinate synthetase family. As to quaternary structure, homodimer. Mg(2+) serves as cofactor.

Its subcellular location is the cytoplasm. The catalysed reaction is IMP + L-aspartate + GTP = N(6)-(1,2-dicarboxyethyl)-AMP + GDP + phosphate + 2 H(+). It participates in purine metabolism; AMP biosynthesis via de novo pathway; AMP from IMP: step 1/2. Plays an important role in the de novo pathway of purine nucleotide biosynthesis. Catalyzes the first committed step in the biosynthesis of AMP from IMP. The polypeptide is Adenylosuccinate synthetase (Syntrophotalea carbinolica (strain DSM 2380 / NBRC 103641 / GraBd1) (Pelobacter carbinolicus)).